Here is a 459-residue protein sequence, read N- to C-terminus: tRNA-guanine(15) transglycosylase (459 aa).

Asp-90 functions as the Nucleophile in the catalytic mechanism. Substrate is bound by residues Asp-125 and Gly-192. Zn(2+)-binding residues include Cys-275, Cys-277, and Cys-280.

Belongs to the archaeosine tRNA-ribosyltransferase family. The cofactor is Zn(2+).

The enzyme catalyses guanosine(15) in tRNA + 7-cyano-7-deazaguanine = 7-cyano-7-carbaguanosine(15) in tRNA + guanine. The protein operates within tRNA modification; archaeosine-tRNA biosynthesis. Functionally, exchanges the guanine residue with 7-cyano-7-deazaguanine (preQ0) at position 15 in the dihydrouridine loop (D-loop) of archaeal tRNAs. The polypeptide is tRNA-guanine(15) transglycosylase (Methanopyrus kandleri (strain AV19 / DSM 6324 / JCM 9639 / NBRC 100938)).